We begin with the raw amino-acid sequence, 96 residues long: Glutamyl-tRNA(Gln) amidotransferase subunit C (96 aa).

Belongs to the GatC family. Heterotrimer of A, B and C subunits.

The enzyme catalyses L-glutamyl-tRNA(Gln) + L-glutamine + ATP + H2O = L-glutaminyl-tRNA(Gln) + L-glutamate + ADP + phosphate + H(+). It carries out the reaction L-aspartyl-tRNA(Asn) + L-glutamine + ATP + H2O = L-asparaginyl-tRNA(Asn) + L-glutamate + ADP + phosphate + 2 H(+). Allows the formation of correctly charged Asn-tRNA(Asn) or Gln-tRNA(Gln) through the transamidation of misacylated Asp-tRNA(Asn) or Glu-tRNA(Gln) in organisms which lack either or both of asparaginyl-tRNA or glutaminyl-tRNA synthetases. The reaction takes place in the presence of glutamine and ATP through an activated phospho-Asp-tRNA(Asn) or phospho-Glu-tRNA(Gln). This is Glutamyl-tRNA(Gln) amidotransferase subunit C from Neisseria meningitidis serogroup B (strain ATCC BAA-335 / MC58).